The primary structure comprises 1144 residues: Probable translation initiation factor IF-2 (1144 aa).

The region spanning 232–362 is the DOD-type homing endonuclease domain; that stretch reads FAGVMFGDGS…LSLLLLRFGI (131 aa). The region spanning 551–768 is the tr-type G domain; the sequence is TTETHNFVAN…LIAGLSQKYL (218 aa). GTP contacts are provided by residues 624 to 628 and 678 to 681; these read DTPGH and NKID.

Belongs to the TRAFAC class translation factor GTPase superfamily. Classic translation factor GTPase family. IF-2 subfamily. Post-translationally, this protein undergoes a protein self splicing that involves a post-translational excision of the intervening region (intein) followed by peptide ligation.

In terms of biological role, function in general translation initiation by promoting the binding of the formylmethionine-tRNA to ribosomes. Seems to function along with eIF-2. This chain is Probable translation initiation factor IF-2 (infB), found in Thermococcus kodakarensis (strain ATCC BAA-918 / JCM 12380 / KOD1) (Pyrococcus kodakaraensis (strain KOD1)).